A 590-amino-acid polypeptide reads, in one-letter code: DNA primase (590 aa).

The CHC2-type zinc-finger motif lies at 37–61 (CPFHTEKTPSFIVNPAGAHYHCFGC). The 81-residue stretch at 253 to 333 (KKVILVEGQA…QMSVFVCKLP (81 aa)) folds into the Toprim domain. Positions 259, 304, and 306 each coordinate Mg(2+).

Belongs to the DnaG primase family. Monomer. Interacts with DnaB. It depends on Zn(2+) as a cofactor. Mg(2+) serves as cofactor.

The catalysed reaction is ssDNA + n NTP = ssDNA/pppN(pN)n-1 hybrid + (n-1) diphosphate.. Its function is as follows. RNA polymerase that catalyzes the synthesis of short RNA molecules used as primers for DNA polymerase during DNA replication. This chain is DNA primase, found in Chlamydia pneumoniae (Chlamydophila pneumoniae).